Reading from the N-terminus, the 190-residue chain is ATP synthase subunit C lysine N-methyltransferase (190 aa).

Belongs to the ANT/ATPSC lysine N-methyltransferase family.

The protein resides in the mitochondrion. The enzyme catalyses L-lysyl-[protein] + 3 S-adenosyl-L-methionine = N(6),N(6),N(6)-trimethyl-L-lysyl-[protein] + 3 S-adenosyl-L-homocysteine + 3 H(+). Functionally, mitochondrial protein-lysine N-methyltransferase that trimethylates ATP synthase subunit C. Trimethylation is required for proper incorporation of the C subunit into the ATP synthase complex and mitochondrial respiration. The chain is ATP synthase subunit C lysine N-methyltransferase from Caenorhabditis elegans.